We begin with the raw amino-acid sequence, 876 residues long: Alanine--tRNA ligase (876 aa).

Zn(2+) is bound by residues His-565, His-569, Cys-667, and His-671.

It belongs to the class-II aminoacyl-tRNA synthetase family. Zn(2+) is required as a cofactor.

The protein localises to the cytoplasm. The enzyme catalyses tRNA(Ala) + L-alanine + ATP = L-alanyl-tRNA(Ala) + AMP + diphosphate. Functionally, catalyzes the attachment of alanine to tRNA(Ala) in a two-step reaction: alanine is first activated by ATP to form Ala-AMP and then transferred to the acceptor end of tRNA(Ala). Also edits incorrectly charged Ser-tRNA(Ala) and Gly-tRNA(Ala) via its editing domain. This Staphylococcus aureus (strain MRSA252) protein is Alanine--tRNA ligase.